Consider the following 127-residue polypeptide: Fluoride-specific ion channel FluC 1 (127 aa).

The next 3 membrane-spanning stretches (helical) occupy residues Pro6 to Leu26, Phe29 to Phe49, and Glu95 to Gly115.

Belongs to the fluoride channel Fluc/FEX (TC 1.A.43) family.

The protein localises to the cell membrane. The catalysed reaction is fluoride(in) = fluoride(out). In terms of biological role, fluoride-specific ion channel. Important for reducing fluoride concentration in the cell, thus reducing its toxicity. The protein is Fluoride-specific ion channel FluC 1 of Haloarcula marismortui (strain ATCC 43049 / DSM 3752 / JCM 8966 / VKM B-1809) (Halobacterium marismortui).